The chain runs to 399 residues: Cell division protein FtsZ (399 aa).

GTP contacts are provided by residues 30-34 (GGGSN), 117-119 (GTG), glutamate 148, lysine 152, and aspartate 196. The interval 349 to 368 (TLMSGNQNAPSGSYEQQDSS) is disordered. The span at 351–368 (MSGNQNAPSGSYEQQDSS) shows a compositional bias: polar residues.

It belongs to the FtsZ family. Homodimer. Polymerizes to form a dynamic ring structure in a strictly GTP-dependent manner. Interacts directly with several other division proteins.

The protein resides in the cytoplasm. In terms of biological role, essential cell division protein that forms a contractile ring structure (Z ring) at the future cell division site. The regulation of the ring assembly controls the timing and the location of cell division. One of the functions of the FtsZ ring is to recruit other cell division proteins to the septum to produce a new cell wall between the dividing cells. Binds GTP and shows GTPase activity. In Borreliella burgdorferi (strain ATCC 35210 / DSM 4680 / CIP 102532 / B31) (Borrelia burgdorferi), this protein is Cell division protein FtsZ.